Consider the following 190-residue polypeptide: High affinity copper uptake protein 1 (190 aa).

The disordered stretch occupies residues 1-35 (MDHSHHMGMSYMDSNSTMQPSHHHPTTSASHSHGG). Residues 1-61 (MDHSHHMGMS…KNVELLFSGL (61 aa)) are Extracellular-facing. Positions 5–6 (HH) match the Bis-His motif motif. The short motif at 7-12 (MGMSYM) is the Methionine segments (Mets) motif element. N-linked (GlcNAc...) asparagine glycosylation is present at asparagine 15. Low complexity predominate over residues 26–35 (TTSASHSHGG). O-linked (GalNAc...) threonine glycosylation is present at threonine 27. Residues 62-82 (VINTAGEMAGAFVAVFLLAMF) form a helical membrane-spanning segment. Topologically, residues 83 to 132 (YEGLKIARESLLRKSQVSIRYNSMPVPGPNGTILMETHKTVGQQMLSFPH) are cytoplasmic. The residue at position 114 (threonine 114) is a Phosphothreonine. Residues 133–153 (LLQTVLHIIQVVISYFLMLIF) traverse the membrane as a helical segment. Topologically, residues 154-156 (MTY) are extracellular. A helical transmembrane segment spans residues 157–177 (NGYLCIAVAAGAGTGYFLFSW). Over 178–190 (KKAVVVDITEHCH) the chain is Cytoplasmic. Cysteine 189 bears the Cysteine sulfenic acid (-SOH) mark.

The protein belongs to the copper transporter (Ctr) (TC 1.A.56) family. SLC31A subfamily. In terms of assembly, homotrimer; is stabilized by cisplatin via interactions between cisplatin and the methionine-rich clusters, and could be crucial for the copper(2+) reduction process and copper(1+) stabilization. Heterotrimer between SLC31A1, CCS and SOD1; this heterotrimer is copper(1+)-mediated and its maintenance is regulated through SOD1 activation. Interacts with KDR; this interaction is induced upon VEGFA stimulation leading to SLC31A1 and KDR subsequent co-internalization to early endosomes, thereby activating KDR downstream signaling in endothelial cells. Interacts (via C-terminal domain) with ATOX1 (via dimer form); this interaction improves ATOX1 stability and controls intracellular copper(1+) levels. Interacts with SLC31A2; this interaction stabilizes SLC31A2 and protects its from ubiquitination and degradation. Interacts (via C-terminal domain) with CCS; this interaction is copper(1+)-mediated. Post-translationally, O-Glycosylation at Thr-27 protects from proteolytic cleavage in the N-terminal extracellular domain. In terms of processing, proteolytic cleavage, leading to a truncated form, is facilitated by SLC31A2 and initiated preferentially by CTSL and to a minor extend by CTSB in endolysosomal compartments. In vitro, is cleaved by CTSL/cathepsin L between residues 8 and 9 from the amino terminus. A post-CTSL/cathepsin L processing occurs to yield to the fully truncated form. Sulfenylated at Cys-189 after stimulation with VEGFA, which induces SLC31A1-KDR disulfide bond formation and their co-internalization to early endosomes, driving to a sustained VEGFR2 signaling.

It is found in the cell membrane. It localises to the early endosome membrane. Its subcellular location is the recycling endosome membrane. The protein resides in the apical cell membrane. The protein localises to the late endosome membrane. It is found in the basolateral cell membrane. It catalyses the reaction Ag(+)(out) = Ag(+)(in). It carries out the reaction Cu(+)(out) = Cu(+)(in). Its activity is regulated as follows. Copper(1+) transport is stimulated by extracellular acidic pH and high potassium ions concentrations. Copper(1+) import is regulated by a copper(1+)-dependent recycling of SLC31A1. Its function is as follows. Uniporter that mediates the transport of copper(1+) from the extracellular space to the cytoplasm, across the plasma membrane and delivers directly copper(1+) to specific chaperone such as ATOX1, via a copper(1+)- mediated transient interaction between the C-terminal domain and a copper(1+) chaperone, thus controlling intracellular copper(1+) levels. May function in copper(1+) import from the apical membrane thus may drive intestinal copper absorption. The copper(1+) transport mechanism is sodium-independent, saturable and of high-affinity. Also mediates the uptake of silver(1+). May function in the influx of the platinum-containing chemotherapeutic agents. The platinum-containing chemotherapeutic agents uptake is saturable. In vitro, mediates the transport of cadmium(2+) into cells. Also participates in the first step of copper(2+) acquisition by cells through a direct transfer of copper(2+) from copper(2+) carriers in blood, such as ALB to the N-terminal domain of SLC31A1, leading to copper(2+) reduction and probably followed by copper(1+) stabilization. In addition, functions as a redox sensor to promote angiogenesis in endothelial cells, in a copper(1+) transport independent manner, by transmitting the VEGF-induced ROS signal through a sulfenylation at Cys-189 leadin g to a subsequent disulfide bond formation between SLC31A1 and KDR. The SLC31A1-KDR complex is then co-internalized to early endosomes, driving a sustained VEGFR2 signaling. Mobilizes copper(1+) out of the endosomal compartment, making copper(1+) available for export out of the cells. The chain is High affinity copper uptake protein 1 from Homo sapiens (Human).